Here is a 218-residue protein sequence, read N- to C-terminus: LexA repressor (218 aa).

The segment at residues 28 to 48 (RAEIAAEFGFSSPNSAEEHLR) is a DNA-binding region (H-T-H motif). Residues Ser-136 and Lys-173 each act as for autocatalytic cleavage activity in the active site.

This sequence belongs to the peptidase S24 family. As to quaternary structure, homodimer.

The catalysed reaction is Hydrolysis of Ala-|-Gly bond in repressor LexA.. Functionally, represses a number of genes involved in the response to DNA damage (SOS response), including recA and lexA. In the presence of single-stranded DNA, RecA interacts with LexA causing an autocatalytic cleavage which disrupts the DNA-binding part of LexA, leading to derepression of the SOS regulon and eventually DNA repair. In Cupriavidus metallidurans (strain ATCC 43123 / DSM 2839 / NBRC 102507 / CH34) (Ralstonia metallidurans), this protein is LexA repressor.